Here is a 201-residue protein sequence, read N- to C-terminus: Histidinol dehydrogenase (201 aa).

Belongs to the histidinol dehydrogenase family. Homodimer. It depends on Zn(2+) as a cofactor.

The enzyme catalyses L-histidinol + 2 NAD(+) + H2O = L-histidine + 2 NADH + 3 H(+). It participates in amino-acid biosynthesis; L-histidine biosynthesis; L-histidine from 5-phospho-alpha-D-ribose 1-diphosphate: step 9/9. Catalyzes the sequential NAD-dependent oxidations of L-histidinol to L-histidinaldehyde and then to L-histidine. In Buchnera aphidicola subsp. Diuraphis noxia, this protein is Histidinol dehydrogenase (hisD).